A 426-amino-acid chain; its full sequence is Glutamate-1-semialdehyde 2,1-aminomutase (426 aa).

N6-(pyridoxal phosphate)lysine is present on K266.

This sequence belongs to the class-III pyridoxal-phosphate-dependent aminotransferase family. HemL subfamily. It depends on pyridoxal 5'-phosphate as a cofactor.

The protein localises to the cytoplasm. It catalyses the reaction (S)-4-amino-5-oxopentanoate = 5-aminolevulinate. Its pathway is porphyrin-containing compound metabolism; protoporphyrin-IX biosynthesis; 5-aminolevulinate from L-glutamyl-tRNA(Glu): step 2/2. In Methanocaldococcus jannaschii (strain ATCC 43067 / DSM 2661 / JAL-1 / JCM 10045 / NBRC 100440) (Methanococcus jannaschii), this protein is Glutamate-1-semialdehyde 2,1-aminomutase (hemL).